The sequence spans 347 residues: Phosphoribosylformylglycinamidine cyclo-ligase (347 aa).

The protein belongs to the AIR synthase family.

Its subcellular location is the cytoplasm. The enzyme catalyses 2-formamido-N(1)-(5-O-phospho-beta-D-ribosyl)acetamidine + ATP = 5-amino-1-(5-phospho-beta-D-ribosyl)imidazole + ADP + phosphate + H(+). Its pathway is purine metabolism; IMP biosynthesis via de novo pathway; 5-amino-1-(5-phospho-D-ribosyl)imidazole from N(2)-formyl-N(1)-(5-phospho-D-ribosyl)glycinamide: step 2/2. The protein is Phosphoribosylformylglycinamidine cyclo-ligase of Prochlorococcus marinus subsp. pastoris (strain CCMP1986 / NIES-2087 / MED4).